A 417-amino-acid chain; its full sequence is UPF0761 membrane protein Veis_3782 (417 aa).

Helical transmembrane passes span 54-74, 111-131, 151-171, 192-212, 226-246, and 261-281; these read ILAL…FPIF, GLGL…ILTI, VLIY…SLAL, FLFD…LYHY, GGLF…LYLG, and LPIL…GAVV.

Belongs to the UPF0761 family.

Its subcellular location is the cell inner membrane. This Verminephrobacter eiseniae (strain EF01-2) protein is UPF0761 membrane protein Veis_3782.